The chain runs to 554 residues: Sesquiterpene synthase 14b (554 aa).

Mg(2+)-binding residues include Asp305, Asp309, Asp449, and Glu457. Residues 305–309 (DDLYD) carry the DDXXD motif motif.

This sequence belongs to the terpene synthase family. Tpsa subfamily. It depends on Mg(2+) as a cofactor. Mn(2+) is required as a cofactor.

It catalyses the reaction (2E,6E)-farnesyl diphosphate = (E)-gamma-bisabolene + diphosphate. The catalysed reaction is (2Z,6Z)-farnesyl diphosphate = (E)-gamma-bisabolene + diphosphate. It carries out the reaction (2Z,6Z)-farnesyl diphosphate = (E)-alpha-bisabolene + diphosphate. The enzyme catalyses (2Z,6Z)-farnesyl diphosphate = (Z)-beta-farnesene + diphosphate. It catalyses the reaction (2E,6E)-farnesyl diphosphate = (E)-beta-farnesene + diphosphate. The catalysed reaction is (2E,6E)-farnesyl diphosphate = (+)-thujopsene + diphosphate. It carries out the reaction (2Z,6Z)-farnesyl diphosphate = (E)-beta-farnesene + diphosphate. The enzyme catalyses (2E,6E)-farnesyl diphosphate = (Z)-beta-farnesene + diphosphate. It catalyses the reaction (2Z,6Z)-farnesyl diphosphate = beta-acoradiene + diphosphate. The catalysed reaction is (2Z,6Z)-farnesyl diphosphate = alpha-acoradiene + diphosphate. It carries out the reaction (2Z,6Z)-farnesyl diphosphate = beta-bisabolene + diphosphate. The enzyme catalyses (2E,6E)-farnesyl diphosphate = (-)-alpha-cedrene + diphosphate. It catalyses the reaction (2E,6E)-farnesyl diphosphate = beta-bisabolene + diphosphate. The catalysed reaction is (2E,6E)-farnesyl diphosphate = beta-acoradiene + diphosphate. It carries out the reaction (2Z,6Z)-farnesyl diphosphate = (-)-alpha-cedrene + diphosphate. The enzyme catalyses (2E)-geranyl diphosphate = terpinolene + diphosphate. It catalyses the reaction (2E)-geranyl diphosphate = limonene + diphosphate. The catalysed reaction is (2E)-geranyl diphosphate = beta-myrcene + diphosphate. The protein operates within secondary metabolite biosynthesis; terpenoid biosynthesis. Functionally, sesquiterpene synthase involved in the biosynthesis of volatile compounds. Mediates the conversion of (2E,6E)-farnesyl diphosphate ((EE)-FPP) into (+)-thujopsene, beta-bisabolene, alpha-cederene, beta-acoradiene, (E)-gamma-bisabolene, (Z)-alpha-bisabolene, (Z)-beta-farnesene and (E)-beta-farnesene, and of (2Z,6Z)-farnesyl diphosphate ((ZZ)-FPP) into (E)-gamma-bisabolene, (E)-alpha-bisabolene, (E)-beta-farnesene, (Z)-beta-farnesene, beta-bisabolene, beta-acoradiene and alpha-acoradiene. Can act with a low efficiency as a monoterpene synthase with geranyl diphosphate (GPP) as substrate, thus producing beta-myrcene, limonene and terpinolene. This chain is Sesquiterpene synthase 14b, found in Solanum habrochaites (Wild tomato).